The primary structure comprises 96 residues: Co-chaperonin GroES (96 aa).

Belongs to the GroES chaperonin family. As to quaternary structure, heptamer of 7 subunits arranged in a ring. Interacts with the chaperonin GroEL.

It localises to the cytoplasm. In terms of biological role, together with the chaperonin GroEL, plays an essential role in assisting protein folding. The GroEL-GroES system forms a nano-cage that allows encapsulation of the non-native substrate proteins and provides a physical environment optimized to promote and accelerate protein folding. GroES binds to the apical surface of the GroEL ring, thereby capping the opening of the GroEL channel. This Geotalea daltonii (strain DSM 22248 / JCM 15807 / FRC-32) (Geobacter daltonii) protein is Co-chaperonin GroES.